The sequence spans 812 residues: Leucine--tRNA ligase (812 aa).

Residues 40–51 (SYPSGSNLHAGH) carry the 'HIGH' region motif. Residues 572-576 (KMSKS) carry the 'KMSKS' region motif. Residue Lys575 participates in ATP binding.

It belongs to the class-I aminoacyl-tRNA synthetase family.

Its subcellular location is the cytoplasm. It catalyses the reaction tRNA(Leu) + L-leucine + ATP = L-leucyl-tRNA(Leu) + AMP + diphosphate. The chain is Leucine--tRNA ligase from Clostridium tetani (strain Massachusetts / E88).